Consider the following 361-residue polypeptide: Queuine tRNA-ribosyltransferase (361 aa).

Asp-92 serves as the catalytic Proton acceptor. Substrate contacts are provided by residues 92-96 (DSGGF), Asp-146, Gln-189, and Gly-216. An RNA binding region spans residues 247 to 253 (GVGKPAD). The active-site Nucleophile is Asp-266. Residues 271–275 (TRSGR) form an RNA binding; important for wobble base 34 recognition region. Residues Cys-304, Cys-306, Cys-309, and His-335 each coordinate Zn(2+).

This sequence belongs to the queuine tRNA-ribosyltransferase family. As to quaternary structure, homodimer. Within each dimer, one monomer is responsible for RNA recognition and catalysis, while the other monomer binds to the replacement base PreQ1. Requires Zn(2+) as cofactor.

The enzyme catalyses 7-aminomethyl-7-carbaguanine + guanosine(34) in tRNA = 7-aminomethyl-7-carbaguanosine(34) in tRNA + guanine. Its pathway is tRNA modification; tRNA-queuosine biosynthesis. Functionally, catalyzes the base-exchange of a guanine (G) residue with the queuine precursor 7-aminomethyl-7-deazaguanine (PreQ1) at position 34 (anticodon wobble position) in tRNAs with GU(N) anticodons (tRNA-Asp, -Asn, -His and -Tyr). Catalysis occurs through a double-displacement mechanism. The nucleophile active site attacks the C1' of nucleotide 34 to detach the guanine base from the RNA, forming a covalent enzyme-RNA intermediate. The proton acceptor active site deprotonates the incoming PreQ1, allowing a nucleophilic attack on the C1' of the ribose to form the product. After dissociation, two additional enzymatic reactions on the tRNA convert PreQ1 to queuine (Q), resulting in the hypermodified nucleoside queuosine (7-(((4,5-cis-dihydroxy-2-cyclopenten-1-yl)amino)methyl)-7-deazaguanosine). The polypeptide is Queuine tRNA-ribosyltransferase (Rickettsia felis (strain ATCC VR-1525 / URRWXCal2) (Rickettsia azadi)).